The sequence spans 275 residues: Shikimate dehydrogenase (NADP(+)) (275 aa).

Residues 15–17 (SKS) and Thr62 contribute to the shikimate site. Residue Lys66 is the Proton acceptor of the active site. Glu78 serves as a coordination point for NADP(+). Shikimate is bound by residues Asn87 and Asp102. NADP(+) contacts are provided by residues 128–132 (GAGGA), 151–156 (NRTAEK), and Leu218. Residue Tyr220 coordinates shikimate. An NADP(+)-binding site is contributed by Gly241.

The protein belongs to the shikimate dehydrogenase family. Homodimer.

It carries out the reaction shikimate + NADP(+) = 3-dehydroshikimate + NADPH + H(+). The protein operates within metabolic intermediate biosynthesis; chorismate biosynthesis; chorismate from D-erythrose 4-phosphate and phosphoenolpyruvate: step 4/7. Its function is as follows. Involved in the biosynthesis of the chorismate, which leads to the biosynthesis of aromatic amino acids. Catalyzes the reversible NADPH linked reduction of 3-dehydroshikimate (DHSA) to yield shikimate (SA). The chain is Shikimate dehydrogenase (NADP(+)) from Shouchella clausii (strain KSM-K16) (Alkalihalobacillus clausii).